A 419-amino-acid chain; its full sequence is Multiple organellar RNA editing factor 1, mitochondrial (419 aa).

The N-terminal 60 residues, 1 to 60 (MAMISHRLRRALLTATSYVNRSISSSITPASDFPSVSAAVLKRSVIGRSTEVATRAPARL), are a transit peptide targeting the mitochondrion. Positions 174 to 401 (KEYGGDKYEN…AGQPGSDQVR (228 aa)) are disordered. Positions 237–252 (GPQQGYATPGQGQGTQ) are enriched in low complexity. Residues 310–327 (GQGGSGNYSQGPQGGYNQ) are compositionally biased toward gly residues. The span at 342–356 (GPASGAGNLGPAPGA) shows a compositional bias: low complexity. A compositionally biased stretch (gly residues) spans 357–367 (GNPGYGQGYSG). Residues 371-401 (EQNQTFPQADQRNRDWNNNNPAGQPGSDQVR) show a composition bias toward polar residues.

The protein belongs to the MORF family. Homodimer and heterodimer with MORF3. Heterodimers with MORF8/RIP1, MORF4/RIP4 and MORF6/RIP6. Interacts with PCMP-E90/MEF13. Interacts with PCMP-H13/MEF35.

It localises to the mitochondrion. In terms of biological role, involved in organellar RNA editing. Required for the processing of numerous RNA editing sites in mitochondria. Binds to the mitochondrial MEF19 and MEF21 factors, two pentatricopeptide repeat-containing proteins involved in RNA editing. The chain is Multiple organellar RNA editing factor 1, mitochondrial from Arabidopsis thaliana (Mouse-ear cress).